The following is a 184-amino-acid chain: Photosystem I assembly protein Ycf4 (184 aa).

2 helical membrane passes run 21–43 (NFCWAFILFLGSSGFLLVGISSY) and 63–85 (GLVMSFYGIAGLFISAYLWCAIS).

The protein belongs to the Ycf4 family.

It localises to the plastid. Its subcellular location is the chloroplast thylakoid membrane. Seems to be required for the assembly of the photosystem I complex. The protein is Photosystem I assembly protein Ycf4 of Spinacia oleracea (Spinach).